The primary structure comprises 498 residues: ATP synthase subunit beta, chloroplastic (498 aa).

172–179 (GGAGVGKT) lines the ATP pocket.

This sequence belongs to the ATPase alpha/beta chains family. As to quaternary structure, F-type ATPases have 2 components, CF(1) - the catalytic core - and CF(0) - the membrane proton channel. CF(1) has five subunits: alpha(3), beta(3), gamma(1), delta(1), epsilon(1). CF(0) has four main subunits: a(1), b(1), b'(1) and c(9-12).

It localises to the plastid. The protein resides in the chloroplast thylakoid membrane. It catalyses the reaction ATP + H2O + 4 H(+)(in) = ADP + phosphate + 5 H(+)(out). Functionally, produces ATP from ADP in the presence of a proton gradient across the membrane. The catalytic sites are hosted primarily by the beta subunits. This is ATP synthase subunit beta, chloroplastic from Morus indica (Mulberry).